Consider the following 488-residue polypeptide: Probable (S)-N-methylcoclaurine 3'-hydroxylase isozyme 2 (488 aa).

The helical transmembrane segment at 2–21 (EVLSIAIVSFSFLLFLFFIL) threads the bilayer. Residue Cys-427 coordinates heme.

Belongs to the cytochrome P450 family. The cofactor is heme. As to expression, expressed at low levels in roots.

The protein resides in the endoplasmic reticulum membrane. The protein localises to the microsome membrane. The catalysed reaction is (S)-N-methylcoclaurine + reduced [NADPH--hemoprotein reductase] + O2 = (S)-3'-hydroxy-N-methylcoclaurine + oxidized [NADPH--hemoprotein reductase] + H2O + H(+). It functions in the pathway alkaloid biosynthesis; (S)-reticuline biosynthesis; (S)-reticuline from (S)-norcoclaurine: step 3/4. 3'-hydroxylation of (S)-N-methylcoclaurine. The sequence is that of Probable (S)-N-methylcoclaurine 3'-hydroxylase isozyme 2 (CYP80B2) from Coptis japonica (Japanese goldthread).